The primary structure comprises 218 residues: Protein-L-isoaspartate O-methyltransferase (218 aa).

Residue S69 is part of the active site.

The protein belongs to the methyltransferase superfamily. L-isoaspartyl/D-aspartyl protein methyltransferase family.

The protein localises to the cytoplasm. It carries out the reaction [protein]-L-isoaspartate + S-adenosyl-L-methionine = [protein]-L-isoaspartate alpha-methyl ester + S-adenosyl-L-homocysteine. Functionally, catalyzes the methyl esterification of L-isoaspartyl residues in peptides and proteins that result from spontaneous decomposition of normal L-aspartyl and L-asparaginyl residues. It plays a role in the repair and/or degradation of damaged proteins. The polypeptide is Protein-L-isoaspartate O-methyltransferase (Aromatoleum aromaticum (strain DSM 19018 / LMG 30748 / EbN1) (Azoarcus sp. (strain EbN1))).